The following is a 122-amino-acid chain: Small ribosomal subunit protein uS13 (122 aa).

The span at G95–T116 shows a compositional bias: basic residues. The tract at residues G95–K122 is disordered.

The protein belongs to the universal ribosomal protein uS13 family. Part of the 30S ribosomal subunit. Forms a loose heterodimer with protein S19. Forms two bridges to the 50S subunit in the 70S ribosome.

Located at the top of the head of the 30S subunit, it contacts several helices of the 16S rRNA. In the 70S ribosome it contacts the 23S rRNA (bridge B1a) and protein L5 of the 50S subunit (bridge B1b), connecting the 2 subunits; these bridges are implicated in subunit movement. Contacts the tRNAs in the A and P-sites. The sequence is that of Small ribosomal subunit protein uS13 from Campylobacter concisus (strain 13826).